Here is a 102-residue protein sequence, read N- to C-terminus: Putative UPF0320 protein YMR326C (102 aa).

The protein belongs to the UPF0320 family.

This Saccharomyces cerevisiae (strain ATCC 204508 / S288c) (Baker's yeast) protein is Putative UPF0320 protein YMR326C.